A 211-amino-acid chain; its full sequence is ATP-dependent Clp protease proteolytic subunit (211 aa).

Serine 114 acts as the Nucleophile in catalysis. Histidine 139 is a catalytic residue.

This sequence belongs to the peptidase S14 family. Fourteen ClpP subunits assemble into 2 heptameric rings which stack back to back to give a disk-like structure with a central cavity, resembling the structure of eukaryotic proteasomes.

It localises to the cytoplasm. The enzyme catalyses Hydrolysis of proteins to small peptides in the presence of ATP and magnesium. alpha-casein is the usual test substrate. In the absence of ATP, only oligopeptides shorter than five residues are hydrolyzed (such as succinyl-Leu-Tyr-|-NHMec, and Leu-Tyr-Leu-|-Tyr-Trp, in which cleavage of the -Tyr-|-Leu- and -Tyr-|-Trp bonds also occurs).. In terms of biological role, cleaves peptides in various proteins in a process that requires ATP hydrolysis. Has a chymotrypsin-like activity. Plays a major role in the degradation of misfolded proteins. The sequence is that of ATP-dependent Clp protease proteolytic subunit from Pseudomonas fluorescens (strain SBW25).